A 508-amino-acid polypeptide reads, in one-letter code: Photosystem II CP47 reaction center protein (508 aa).

6 helical membrane-spanning segments follow: residues 21-36, 101-115, 140-156, 203-218, 237-252, and 457-472; these read SVHIMHTALVSGWAGS, IVFSGLCFLAAIWHW, GIHLFLAGVACFGFGAF, IAAGTLGILAGLFHLS, VLSSSIAAVFFAAFVV, and TFALLFFFGHIWHGAR.

Belongs to the PsbB/PsbC family. PsbB subfamily. In terms of assembly, PSII is composed of 1 copy each of membrane proteins PsbA, PsbB, PsbC, PsbD, PsbE, PsbF, PsbH, PsbI, PsbJ, PsbK, PsbL, PsbM, PsbT, PsbX, PsbY, PsbZ, Psb30/Ycf12, at least 3 peripheral proteins of the oxygen-evolving complex and a large number of cofactors. It forms dimeric complexes. It depends on Binds multiple chlorophylls. PSII binds additional chlorophylls, carotenoids and specific lipids. as a cofactor.

Its subcellular location is the plastid. It localises to the chloroplast thylakoid membrane. Its function is as follows. One of the components of the core complex of photosystem II (PSII). It binds chlorophyll and helps catalyze the primary light-induced photochemical processes of PSII. PSII is a light-driven water:plastoquinone oxidoreductase, using light energy to abstract electrons from H(2)O, generating O(2) and a proton gradient subsequently used for ATP formation. The chain is Photosystem II CP47 reaction center protein from Oryza sativa subsp. indica (Rice).